The sequence spans 58 residues: Small ribosomal subunit protein bS21 (58 aa).

The disordered stretch occupies residues 36-58; it reads EFYEKPSVKRKRKSEAARKRKKF. Positions 43 to 58 are enriched in basic residues; sequence VKRKRKSEAARKRKKF.

Belongs to the bacterial ribosomal protein bS21 family.

The sequence is that of Small ribosomal subunit protein bS21 from Streptococcus uberis (strain ATCC BAA-854 / 0140J).